A 1912-amino-acid chain; its full sequence is Protein javelin (1912 aa).

Disordered stretches follow at residues 1–32 (MGNGYFRTSQTSSSSRQREKRGKDSYSYQHNY), 89–145 (GTGL…VGGA), 298–377 (RSRH…HRLS), 460–515 (QSRR…SLSE), 545–586 (TTRT…TLRQ), 764–920 (SYNQ…EAPV), 965–1010 (IQEN…GKPL), 1257–1297 (GINS…GGAA), 1486–1507 (EQQENGEHLEEEDDEQDDQYED), and 1881–1912 (YDPSKEPPPQVEEGTDKIPTDAELYDSLDDKM). Composition is skewed to basic residues over residues 97–133 (QQLHHHHSNQVNQHHHQQQQSHHHLQHANLHSHHPHA) and 299–313 (SRHKFQFKQFKKKPP). The segment covering 339-354 (ADDTQSQRSNSATCDS) has biased composition (polar residues). The segment covering 355–374 (HQQQQQQQHQPQQQHQQQQH) has biased composition (low complexity). Residues 489–498 (EHSQSSVFPE) are compositionally biased toward polar residues. Residues 499–512 (TTTSNSDDQTDSPS) show a composition bias toward low complexity. Residues 553–566 (SEEGEEEQTGEEVV) are compositionally biased toward acidic residues. A compositionally biased stretch (polar residues) spans 568 to 586 (SLTTPTEPQTSDSESTLRQ). Composition is skewed to basic and acidic residues over residues 772 to 792 (QRKEAKKEQQVTRAETYDSIR) and 802 to 869 (RQRE…RKEE). Residues 890–904 (SQQEDTVADVEEEDN) are compositionally biased toward acidic residues. Residues 965–979 (IQENKETSQRIEPKP) show a composition bias toward basic and acidic residues. Low complexity predominate over residues 981–990 (PKTNSNSSST). 2 stretches are compositionally biased toward acidic residues: residues 1494-1507 (LEEEDDEQDDQYED) and 1903-1912 (ELYDSLDDKM).

Its subcellular location is the cytoplasm. It localises to the cytoskeleton. Important for normal assembly of actin bundles during bristle formation. The chain is Protein javelin from Drosophila melanogaster (Fruit fly).